We begin with the raw amino-acid sequence, 191 residues long: Corrinoid adenosyltransferase (191 aa).

ATP-binding positions include 10–18 (TRTGDNGTT), Lys-28, 140–145 (RRAERS), and Asn-166.

Belongs to the Cob(I)alamin adenosyltransferase family.

Its subcellular location is the cytoplasm. It catalyses the reaction 2 cob(II)yrinate a,c diamide + reduced [electron-transfer flavoprotein] + 2 ATP = 2 adenosylcob(III)yrinate a,c-diamide + 2 triphosphate + oxidized [electron-transfer flavoprotein] + 3 H(+). The enzyme catalyses 2 cob(II)alamin + reduced [electron-transfer flavoprotein] + 2 ATP = 2 adenosylcob(III)alamin + 2 triphosphate + oxidized [electron-transfer flavoprotein] + 3 H(+). The protein operates within cofactor biosynthesis; adenosylcobalamin biosynthesis; adenosylcobalamin from cob(II)yrinate a,c-diamide: step 2/7. This Mycobacterium leprae (strain TN) protein is Corrinoid adenosyltransferase.